A 182-amino-acid chain; its full sequence is Putative manganese efflux pump MntP (182 aa).

A run of 6 helical transmembrane segments spans residues 6-26 (LIPL…VSLG), 37-57 (ILYI…IGMV), 71-91 (HFAG…STIL), 101-121 (IGIS…SVGL), 131-151 (IITI…GLLI), and 162-182 (YGEI…LFPI).

It belongs to the MntP (TC 9.B.29) family.

The protein localises to the cell membrane. Functionally, probably functions as a manganese efflux pump. In Bacillus cereus (strain B4264), this protein is Putative manganese efflux pump MntP.